Consider the following 492-residue polypeptide: Trigger factor (492 aa).

In terms of domain architecture, PPIase FKBP-type spans 164 to 249 (GDLVVVDFVG…VSDVRVPRKA (86 aa)). Residues 440-492 (EAEEDSIGKHDHDHDHKEKASDKPKAKKAAAPKKKAAPKKKAAPKAEKKSSDE) form a disordered region. Residues 445–463 (SIGKHDHDHDHKEKASDKP) show a composition bias toward basic and acidic residues. The span at 464–482 (KAKKAAAPKKKAAPKKKAA) shows a compositional bias: basic residues. A compositionally biased stretch (basic and acidic residues) spans 483-492 (PKAEKKSSDE).

The protein belongs to the FKBP-type PPIase family. Tig subfamily.

It is found in the cytoplasm. The catalysed reaction is [protein]-peptidylproline (omega=180) = [protein]-peptidylproline (omega=0). Its function is as follows. Involved in protein export. Acts as a chaperone by maintaining the newly synthesized protein in an open conformation. Functions as a peptidyl-prolyl cis-trans isomerase. The chain is Trigger factor from Zymomonas mobilis subsp. mobilis (strain ATCC 31821 / ZM4 / CP4).